The following is a 179-amino-acid chain: ATP synthase subunit b, chloroplastic (179 aa).

The chain crosses the membrane as a helical span at residues 28–46; that stretch reads LLNILALVAILVYTGKDFL.

It belongs to the ATPase B chain family. In terms of assembly, F-type ATPases have 2 components, F(1) - the catalytic core - and F(0) - the membrane proton channel. F(1) has five subunits: alpha(3), beta(3), gamma(1), delta(1), epsilon(1). F(0) has four main subunits: a(1), b(1), b'(1) and c(10-14). The alpha and beta chains form an alternating ring which encloses part of the gamma chain. F(1) is attached to F(0) by a central stalk formed by the gamma and epsilon chains, while a peripheral stalk is formed by the delta, b and b' chains.

It is found in the plastid. The protein resides in the chloroplast thylakoid membrane. F(1)F(0) ATP synthase produces ATP from ADP in the presence of a proton or sodium gradient. F-type ATPases consist of two structural domains, F(1) containing the extramembraneous catalytic core and F(0) containing the membrane proton channel, linked together by a central stalk and a peripheral stalk. During catalysis, ATP synthesis in the catalytic domain of F(1) is coupled via a rotary mechanism of the central stalk subunits to proton translocation. Its function is as follows. Component of the F(0) channel, it forms part of the peripheral stalk, linking F(1) to F(0). This Thalassiosira pseudonana (Marine diatom) protein is ATP synthase subunit b, chloroplastic.